The following is a 122-amino-acid chain: Large ribosomal subunit protein uL14 (122 aa).

It belongs to the universal ribosomal protein uL14 family. In terms of assembly, part of the 50S ribosomal subunit. Forms a cluster with proteins L3 and L19. In the 70S ribosome, L14 and L19 interact and together make contacts with the 16S rRNA in bridges B5 and B8.

Functionally, binds to 23S rRNA. Forms part of two intersubunit bridges in the 70S ribosome. The polypeptide is Large ribosomal subunit protein uL14 (Acaryochloris marina (strain MBIC 11017)).